A 272-amino-acid chain; its full sequence is MKRTAFFISDGTGITAETLGQSLLAQFESIPFNKFTRPYIDSPDKARTMVQQINAAAERDGVRPIIFDTIVNQDIREILATSNGFMIDIFSSFLSPLEQELTAHSSYSVGKSHSIGGNSNYMERIEAVNFALDNDDGARTHYYDKADLILVGVSRCGKTPTCLYMAMQFGIRAANYPLTEDDMERLQLPAVLKKHHNKLFGLTIDPDRLTAIRHERKPNSRYSSFAQCEFEVREVESLFRRENIPNINSTHFSVEEISAKILVEKGVERRFK.

ADP is bound at residue 152 to 159; the sequence is GVSRCGKT.

It belongs to the pyruvate, phosphate/water dikinase regulatory protein family. PSRP subfamily.

It carries out the reaction [pyruvate, water dikinase] + ADP = [pyruvate, water dikinase]-phosphate + AMP + H(+). The enzyme catalyses [pyruvate, water dikinase]-phosphate + phosphate + H(+) = [pyruvate, water dikinase] + diphosphate. In terms of biological role, bifunctional serine/threonine kinase and phosphorylase involved in the regulation of the phosphoenolpyruvate synthase (PEPS) by catalyzing its phosphorylation/dephosphorylation. This Pseudomonas putida (strain GB-1) protein is Putative phosphoenolpyruvate synthase regulatory protein.